Here is a 439-residue protein sequence, read N- to C-terminus: Probable cinnamyl alcohol dehydrogenase 8C (439 aa).

Residue Cys120 participates in Zn(2+) binding. Thr122 provides a ligand contact to NADP(+). Zn(2+) contacts are provided by His142, Glu143, Cys173, Cys176, Cys179, Cys187, and Cys239. NADP(+)-binding positions include Thr243, 264–269 (GLGGLG), 287–292 (STSPGK), Thr327, Gly351, and 374–376 (NCV).

This sequence belongs to the zinc-containing alcohol dehydrogenase family. Homodimer. Zn(2+) serves as cofactor.

The enzyme catalyses (E)-cinnamyl alcohol + NADP(+) = (E)-cinnamaldehyde + NADPH + H(+). It carries out the reaction (E)-coniferol + NADP(+) = (E)-coniferaldehyde + NADPH + H(+). The catalysed reaction is (E)-sinapyl alcohol + NADP(+) = (E)-sinapaldehyde + NADPH + H(+). It catalyses the reaction (E)-4-coumaroyl alcohol + NADP(+) = (E)-4-coumaraldehyde + NADPH + H(+). The enzyme catalyses (E)-caffeyl alcohol + NADP(+) = (E)-caffeyl aldehyde + NADPH + H(+). It functions in the pathway aromatic compound metabolism; phenylpropanoid biosynthesis. Involved in lignin biosynthesis. Catalyzes the final step specific for the production of lignin monomers. Catalyzes the NADPH-dependent reduction of coniferaldehyde, 5-hydroxyconiferaldehyde, sinapaldehyde, 4-coumaraldehyde and caffeyl aldehyde to their respective alcohols. This chain is Probable cinnamyl alcohol dehydrogenase 8C, found in Oryza sativa subsp. japonica (Rice).